A 600-amino-acid chain; its full sequence is ATP-dependent lipid A-core flippase (600 aa).

4 helical membrane-spanning segments follow: residues 26–46, 82–102, 167–187, and 266–286; these read VGIFLLSILGFVIFASTQPML, LLIVLIAAWQGLGSFLGNYFL, VFLFIYLLMMNWKLTLVMLAI, and PMLQLVIYSAMAVLMFLVLFL. The ABC transmembrane type-1 domain maps to 30–321; it reads LLSILGFVIF…LSEVSSTIQK (292 aa). An ABC transporter domain is found at 353-589; that stretch reads LEVKNLSFFY…NGYYARLHAM (237 aa). Position 387–394 (387–394) interacts with ATP; it reads GRSGSGKS.

This sequence belongs to the ABC transporter superfamily. Lipid exporter (TC 3.A.1.106) family. In terms of assembly, homodimer.

The protein resides in the cell inner membrane. The catalysed reaction is ATP + H2O + lipid A-core oligosaccharideSide 1 = ADP + phosphate + lipid A-core oligosaccharideSide 2.. In terms of biological role, involved in lipopolysaccharide (LPS) biosynthesis. Translocates lipid A-core from the inner to the outer leaflet of the inner membrane. Transmembrane domains (TMD) form a pore in the inner membrane and the ATP-binding domain (NBD) is responsible for energy generation. In Pseudomonas syringae pv. tomato (strain ATCC BAA-871 / DC3000), this protein is ATP-dependent lipid A-core flippase.